The primary structure comprises 137 residues: Large-conductance mechanosensitive channel (137 aa).

2 consecutive transmembrane segments (helical) span residues 9–29 and 79–99; these read AFAV…GAAF and IQTI…VKAI.

This sequence belongs to the MscL family. In terms of assembly, homopentamer.

It localises to the cell inner membrane. Functionally, channel that opens in response to stretch forces in the membrane lipid bilayer. May participate in the regulation of osmotic pressure changes within the cell. In Pseudomonas aeruginosa (strain UCBPP-PA14), this protein is Large-conductance mechanosensitive channel.